The following is a 344-amino-acid chain: Anthranilate phosphoribosyltransferase (344 aa).

Residues Gly85, 88–89 (GD), Thr93, 95–98 (NIST), 113–121 (KHGGRSVSS), and Ser125 contribute to the 5-phospho-alpha-D-ribose 1-diphosphate site. Gly85 contributes to the anthranilate binding site. Ser97 is a binding site for Mg(2+). Arg171 lines the anthranilate pocket. Positions 230 and 231 each coordinate Mg(2+).

This sequence belongs to the anthranilate phosphoribosyltransferase family. As to quaternary structure, homodimer. Mg(2+) is required as a cofactor.

The enzyme catalyses N-(5-phospho-beta-D-ribosyl)anthranilate + diphosphate = 5-phospho-alpha-D-ribose 1-diphosphate + anthranilate. It participates in amino-acid biosynthesis; L-tryptophan biosynthesis; L-tryptophan from chorismate: step 2/5. Catalyzes the transfer of the phosphoribosyl group of 5-phosphorylribose-1-pyrophosphate (PRPP) to anthranilate to yield N-(5'-phosphoribosyl)-anthranilate (PRA). This Delftia acidovorans (strain DSM 14801 / SPH-1) protein is Anthranilate phosphoribosyltransferase.